We begin with the raw amino-acid sequence, 188 residues long: Probable manganese efflux pump MntP (188 aa).

6 consecutive transmembrane segments (helical) span residues Tyr-3–Gly-23, Leu-41–Ala-61, Leu-66–Ile-86, Trp-106–Phe-128, Ala-143–Gly-163, and Ile-168–Gly-188.

This sequence belongs to the MntP (TC 9.B.29) family.

The protein localises to the cell inner membrane. Functionally, probably functions as a manganese efflux pump. The protein is Probable manganese efflux pump MntP of Salmonella heidelberg (strain SL476).